The following is a 217-amino-acid chain: Mitochondrial inner membrane protease ATP23 (217 aa).

Residues 1-21 (MATPTPRHQETPQETTERERC) are disordered. The segment covering 7 to 21 (RHQETPQETTERERC) has biased composition (basic and acidic residues). Residue His118 participates in a divalent metal cation binding. The active site involves Glu119. A divalent metal cation is bound at residue His122.

This sequence belongs to the peptidase M76 family.

Its subcellular location is the mitochondrion inner membrane. In terms of biological role, has a dual role in the assembly of mitochondrial ATPase. Acts as a protease that removes N-terminal residues of mitochondrial ATPase CF(0) subunit 6 at the intermembrane space side. Also involved in the correct assembly of the membrane-embedded ATPase CF(0) particle, probably mediating association of subunit 6 with the subunit 9 ring. The chain is Mitochondrial inner membrane protease ATP23 (ATP23) from Mycosarcoma maydis (Corn smut fungus).